The primary structure comprises 327 residues: Protoheme IX farnesyltransferase (327 aa).

Transmembrane regions (helical) follow at residues 55-75 (LVCT…LNCL), 101-121 (AAFV…VSGV), 124-144 (LAAG…TALL), 152-172 (IVVG…AATG), 180-200 (WLFA…ALLL), 237-257 (FLGI…ILPF), and 278-298 (AKGL…LLVM).

This sequence belongs to the UbiA prenyltransferase family. Protoheme IX farnesyltransferase subfamily.

The protein localises to the cell inner membrane. It carries out the reaction heme b + (2E,6E)-farnesyl diphosphate + H2O = Fe(II)-heme o + diphosphate. It functions in the pathway porphyrin-containing compound metabolism; heme O biosynthesis; heme O from protoheme: step 1/1. Its function is as follows. Converts heme B (protoheme IX) to heme O by substitution of the vinyl group on carbon 2 of heme B porphyrin ring with a hydroxyethyl farnesyl side group. The polypeptide is Protoheme IX farnesyltransferase (Synechococcus sp. (strain CC9311)).